A 352-amino-acid chain; its full sequence is MTINLIKYGLTTAVQADLTKENGQILGRIIGQHRDWYQVITTAGERSAQVTGKLAYEAASPAAFPAVGDWVCLSSSADNQAQIEAIAPRQSVLARGAVNRQDGQIIATNINTIFICMSLNADFNVRRLERYLTIAWDSGALPVIVLTKADLCTDLATKLRAVADVSVGVPTITCSVETGQGLDELQPYLTTGQTVAFVGSSGVGKSTLINRLLGQDILATKSIRTDDNKGRHTTTSRQLIPLPTGACVIDTPGMRELQIFMGDLNQTFAEIAALATQCKFNDCTHTSEPGCAVRAAVEVGTVTSERLQSYQKLQREMSYQGLNSRQLEQAKIQRMFGGKQAMKRVKQRYHRD.

Positions 100–257 (RQDGQIIATN…VIDTPGMREL (158 aa)) constitute a CP-type G domain. GTP is bound by residues 147–150 (TKAD) and 199–207 (GSSGVGKST). Positions 278, 283, 285, and 291 each coordinate Zn(2+).

This sequence belongs to the TRAFAC class YlqF/YawG GTPase family. RsgA subfamily. As to quaternary structure, monomer. Associates with 30S ribosomal subunit, binds 16S rRNA. Zn(2+) is required as a cofactor.

It localises to the cytoplasm. One of several proteins that assist in the late maturation steps of the functional core of the 30S ribosomal subunit. Helps release RbfA from mature subunits. May play a role in the assembly of ribosomal proteins into the subunit. Circularly permuted GTPase that catalyzes slow GTP hydrolysis, GTPase activity is stimulated by the 30S ribosomal subunit. This chain is Small ribosomal subunit biogenesis GTPase RsgA 2, found in Lactiplantibacillus plantarum (strain ATCC BAA-793 / NCIMB 8826 / WCFS1) (Lactobacillus plantarum).